The primary structure comprises 279 residues: Putative ABC transporter ATP-binding protein GSU3001 (279 aa).

The 237-residue stretch at 1–237 (MRFSVDLKAY…PAEMESVKLR (237 aa)) folds into the ABC transporter domain. An ATP-binding site is contributed by 36-43 (GSNGSGKT).

It belongs to the ABC transporter superfamily.

The protein resides in the cell inner membrane. Functionally, probably part of an ABC transporter complex. Responsible for energy coupling to the transport system. The polypeptide is Putative ABC transporter ATP-binding protein GSU3001 (Geobacter sulfurreducens (strain ATCC 51573 / DSM 12127 / PCA)).